We begin with the raw amino-acid sequence, 138 residues long: MLIPRKVKHRKQHHPRQRGIASGGTSVNFGDYGIQALEHAYVTNRQIESARIAINRHIKRGGKVWINIFPDRPLTKKPAETRMGSGKGSPEWWVANVKPGRVLFELSYPNEAIARAALTRAIHKLPIKARIITREEQF.

Positions 1 to 17 (MLIPRKVKHRKQHHPRQ) are enriched in basic residues. Positions 1 to 24 (MLIPRKVKHRKQHHPRQRGIASGG) are disordered.

It belongs to the universal ribosomal protein uL16 family. Part of the 50S ribosomal subunit.

Binds 23S rRNA and is also seen to make contacts with the A and possibly P site tRNAs. The sequence is that of Large ribosomal subunit protein uL16 from Mycobacterium ulcerans (strain Agy99).